Here is a 474-residue protein sequence, read N- to C-terminus: Glutamate--tRNA ligase (474 aa).

Residues 9–19 carry the 'HIGH' region motif; it reads PSPTGYLHVGG. Residues 240–244 carry the 'KMSKS' region motif; it reads KLSKR. Lysine 243 contributes to the ATP binding site.

It belongs to the class-I aminoacyl-tRNA synthetase family. Glutamate--tRNA ligase type 1 subfamily. As to quaternary structure, monomer.

The protein localises to the cytoplasm. It carries out the reaction tRNA(Glu) + L-glutamate + ATP = L-glutamyl-tRNA(Glu) + AMP + diphosphate. Its function is as follows. Catalyzes the attachment of glutamate to tRNA(Glu) in a two-step reaction: glutamate is first activated by ATP to form Glu-AMP and then transferred to the acceptor end of tRNA(Glu). This Vibrio vulnificus (strain CMCP6) protein is Glutamate--tRNA ligase.